A 526-amino-acid chain; its full sequence is GMP synthase [glutamine-hydrolyzing] (526 aa).

Residues 14 to 208 (SILIVDFGSQ…VHDICGLAGD (195 aa)) enclose the Glutamine amidotransferase type-1 domain. Cysteine 91 (nucleophile) is an active-site residue. Active-site residues include histidine 182 and glutamate 184. The region spanning 209-401 (WTMAEFRQTK…LGMPDVFVDR (193 aa)) is the GMPS ATP-PPase domain. Position 236–242 (236–242 (SGGVDSS)) interacts with ATP.

As to quaternary structure, homodimer.

It carries out the reaction XMP + L-glutamine + ATP + H2O = GMP + L-glutamate + AMP + diphosphate + 2 H(+). Its pathway is purine metabolism; GMP biosynthesis; GMP from XMP (L-Gln route): step 1/1. Functionally, catalyzes the synthesis of GMP from XMP. The sequence is that of GMP synthase [glutamine-hydrolyzing] from Zymomonas mobilis subsp. mobilis (strain ATCC 31821 / ZM4 / CP4).